Reading from the N-terminus, the 332-residue chain is Phosphate acyltransferase (332 aa).

This sequence belongs to the PlsX family. Homodimer. Probably interacts with PlsY.

It localises to the cytoplasm. It catalyses the reaction a fatty acyl-[ACP] + phosphate = an acyl phosphate + holo-[ACP]. Its pathway is lipid metabolism; phospholipid metabolism. In terms of biological role, catalyzes the reversible formation of acyl-phosphate (acyl-PO(4)) from acyl-[acyl-carrier-protein] (acyl-ACP). This enzyme utilizes acyl-ACP as fatty acyl donor, but not acyl-CoA. The chain is Phosphate acyltransferase from Thermoanaerobacter pseudethanolicus (strain ATCC 33223 / 39E) (Clostridium thermohydrosulfuricum).